A 61-amino-acid polypeptide reads, in one-letter code: Cytotoxin homolog 2 (61 aa).

Intrachain disulfides connect Cys3–Cys22, Cys15–Cys39, Cys43–Cys54, and Cys55–Cys60.

This sequence belongs to the three-finger toxin family. Short-chain subfamily. Orphan group XV sub-subfamily. As to expression, expressed by the venom gland.

It localises to the secreted. The protein localises to the target cell membrane. Its function is as follows. Has low cytotoxic activity. The protein is Cytotoxin homolog 2 of Naja melanoleuca (Forest cobra).